We begin with the raw amino-acid sequence, 187 residues long: Protein GrpE (187 aa).

The tract at residues 1 to 22 (MADEQNLDAQAQDQAAEAGAGD) is disordered. Residues 7-22 (LDAQAQDQAAEAGAGD) are compositionally biased toward low complexity.

The protein belongs to the GrpE family. As to quaternary structure, homodimer.

It is found in the cytoplasm. Participates actively in the response to hyperosmotic and heat shock by preventing the aggregation of stress-denatured proteins, in association with DnaK and GrpE. It is the nucleotide exchange factor for DnaK and may function as a thermosensor. Unfolded proteins bind initially to DnaJ; upon interaction with the DnaJ-bound protein, DnaK hydrolyzes its bound ATP, resulting in the formation of a stable complex. GrpE releases ADP from DnaK; ATP binding to DnaK triggers the release of the substrate protein, thus completing the reaction cycle. Several rounds of ATP-dependent interactions between DnaJ, DnaK and GrpE are required for fully efficient folding. The polypeptide is Protein GrpE (Pseudomonas syringae pv. tomato (strain ATCC BAA-871 / DC3000)).